A 205-amino-acid polypeptide reads, in one-letter code: ATP-dependent dethiobiotin synthetase BioD (205 aa).

Residue threonine 16 participates in Mg(2+) binding. Lysine 32 is a catalytic residue. Residue threonine 36 participates in substrate binding. Glutamate 97 is a Mg(2+) binding site. 97-100 (EGAG) provides a ligand contact to ATP.

This sequence belongs to the dethiobiotin synthetase family. In terms of assembly, homodimer. Mg(2+) serves as cofactor.

The protein localises to the cytoplasm. The enzyme catalyses (7R,8S)-7,8-diammoniononanoate + CO2 + ATP = (4R,5S)-dethiobiotin + ADP + phosphate + 3 H(+). The protein operates within cofactor biosynthesis; biotin biosynthesis; biotin from 7,8-diaminononanoate: step 1/2. Catalyzes a mechanistically unusual reaction, the ATP-dependent insertion of CO2 between the N7 and N8 nitrogen atoms of 7,8-diaminopelargonic acid (DAPA, also called 7,8-diammoniononanoate) to form a ureido ring. The protein is ATP-dependent dethiobiotin synthetase BioD of Paramagnetospirillum magneticum (strain ATCC 700264 / AMB-1) (Magnetospirillum magneticum).